We begin with the raw amino-acid sequence, 374 residues long: MAIRKKSNKNPPLLSHEFLLQNHADIVSCLAMLFLLGLMFEVTAKGAIIFVALQYNVTRPATEEQATESASLYHYGIKDLATVLFYMLVAIIIHAIIQEYVLDKINRRMHFSKTKHSKFNESGQLSAFYLFACVWGTFILISENYISDPTILWRAYPHNLMTFQTKFFYISQLAYWLHAFPELYFQKTKKEDIPRQLVYIGLYLFHIAGAYLLNLNHLGLVLLVLHYFVEFLFHISRLFYFSDEKYQKGFSLWAVLFVLGRLLTLILSVLTVGFGLARAENQKLDFSTGNFNVLAVRIAVLASICITQAFMMWKFINFQLRRWREHSAFQAPPVKRKPAVTKGRSSRKGTENGVNGTVTSNGADSPRNRKEKSS.

Over 1 to 29 (MAIRKKSNKNPPLLSHEFLLQNHADIVSC) the chain is Cytoplasmic. A helical transmembrane segment spans residues 30 to 50 (LAMLFLLGLMFEVTAKGAIIF). Over 51-76 (VALQYNVTRPATEEQATESASLYHYG) the chain is Lumenal. N-linked (GlcNAc...) asparagine glycosylation is present at Asn56. Residues 77 to 97 (IKDLATVLFYMLVAIIIHAII) form a helical membrane-spanning segment. The Cytoplasmic segment spans residues 98–121 (QEYVLDKINRRMHFSKTKHSKFNE). Positions 117–326 (SKFNESGQLS…NFQLRRWREH (210 aa)) constitute a TLC domain. A helical membrane pass occupies residues 122–142 (SGQLSAFYLFACVWGTFILIS). Residues 143–159 (ENYISDPTILWRAYPHN) lie on the Lumenal side of the membrane. A helical membrane pass occupies residues 160–180 (LMTFQTKFFYISQLAYWLHAF). The Cytoplasmic portion of the chain corresponds to 181 to 192 (PELYFQKTKKED). A helical transmembrane segment spans residues 193 to 213 (IPRQLVYIGLYLFHIAGAYLL). Residues 214–217 (NLNH) are Lumenal-facing. Residues 218–238 (LGLVLLVLHYFVEFLFHISRL) form a helical membrane-spanning segment. Residues 239–251 (FYFSDEKYQKGFS) are Cytoplasmic-facing. A helical membrane pass occupies residues 252–272 (LWAVLFVLGRLLTLILSVLTV). The Lumenal portion of the chain corresponds to 273-297 (GFGLARAENQKLDFSTGNFNVLAVR). Residues 298–318 (IAVLASICITQAFMMWKFINF) form a helical membrane-spanning segment. Over 319–374 (QLRRWREHSAFQAPPVKRKPAVTKGRSSRKGTENGVNGTVTSNGADSPRNRKEKSS) the chain is Cytoplasmic. Residues 333-374 (PVKRKPAVTKGRSSRKGTENGVNGTVTSNGADSPRNRKEKSS) form a disordered region. The span at 334-347 (VKRKPAVTKGRSSR) shows a compositional bias: basic residues. A compositionally biased stretch (polar residues) spans 352 to 363 (NGVNGTVTSNGA). Ser365 is modified (phosphoserine).

Belongs to the TRAM family. Interacts with SEC61B. May interact with Derlin-1/DERL1. In terms of processing, N-glycosylated.

It localises to the endoplasmic reticulum membrane. Its function is as follows. Involved in the translocation of nascent protein chains into or through the endoplasmic reticulum (ER) membrane by facilitating the proper chain positioning at the SEC61 channel. Regulates the exposure of nascent secretory protein chain to the cytosol during translocation into the ER. May affect the phospholipid bilayer in the vicinity of the lateral gate of the SEC61 channel, thereby facilitating ER protein transport. Intimately associates with transmembrane (TM) domain of nascent membrane proteins during the entire integration process into the ER membrane. Associates with the second TM domain of G-protein-coupled receptor opsin/OPSD nascent chain in the ER membrane, which may facilitate its integration into the membrane. Under conditions of ER stress, participates in the disposal of misfolded ER membrane proteins during the unfolded protein response (UPR), an integrated stress response (ISR) pathway, by selectively retrotranslocating misfolded ER-membrane proteins from the ER into the cytosol where they are ubiquitinated and degraded by the proteasome. The protein is Translocating chain-associated membrane protein 1 of Mus musculus (Mouse).